The chain runs to 125 residues: Small ribosomal subunit protein uS12 (125 aa).

Asp89 carries the 3-methylthioaspartic acid modification.

This sequence belongs to the universal ribosomal protein uS12 family. As to quaternary structure, part of the 30S ribosomal subunit. Contacts proteins S8 and S17. May interact with IF1 in the 30S initiation complex.

Functionally, with S4 and S5 plays an important role in translational accuracy. Its function is as follows. Interacts with and stabilizes bases of the 16S rRNA that are involved in tRNA selection in the A site and with the mRNA backbone. Located at the interface of the 30S and 50S subunits, it traverses the body of the 30S subunit contacting proteins on the other side and probably holding the rRNA structure together. The combined cluster of proteins S8, S12 and S17 appears to hold together the shoulder and platform of the 30S subunit. This Cupriavidus necator (strain ATCC 17699 / DSM 428 / KCTC 22496 / NCIMB 10442 / H16 / Stanier 337) (Ralstonia eutropha) protein is Small ribosomal subunit protein uS12.